Here is a 147-residue protein sequence, read N- to C-terminus: Large ribosomal subunit protein uL15 (147 aa).

Over residues 1–12 (MTLRLNDLKPAD) the composition is skewed to basic and acidic residues. The interval 1–61 (MTLRLNDLKP…GFEGGQTPMQ (61 aa)) is disordered. Residues 23–33 (RGIGSGLGKTA) show a composition bias toward gly residues. Positions 34-47 (GRGHKGSFARKGGG) are enriched in basic residues.

It belongs to the universal ribosomal protein uL15 family. Part of the 50S ribosomal subunit.

In terms of biological role, binds to the 23S rRNA. In Xanthomonas oryzae pv. oryzae (strain MAFF 311018), this protein is Large ribosomal subunit protein uL15.